The following is a 215-amino-acid chain: Riboflavin synthase (215 aa).

Lumazine-binding repeat units follow at residues 1–96 (MFTG…FGGH) and 97–193 (FVSG…YRFL). Residues 4–6 (GII), 47–49 (CLT), 61–66 (DVMPET), 100–102 (GHV), lysine 135, 144–146 (SLT), and 158–163 (SLIPHT) contribute to the 2,4-dihydroxypteridine site.

In terms of assembly, homotrimer. Can interact with 6,7-dimethyl-8-ribityllumazine synthase, forming a lumazine synthase/riboflavin synthase complex, also designated as 'heavy riboflavin synthase complex', which consists of a trimer of riboflavin synthase enclosed within an icosahedral structure composed of 60 subunits of 6,7-dimethyl-8-ribityllumazine synthase.

The catalysed reaction is 2 6,7-dimethyl-8-(1-D-ribityl)lumazine + H(+) = 5-amino-6-(D-ribitylamino)uracil + riboflavin. Its pathway is cofactor biosynthesis; riboflavin biosynthesis; riboflavin from 2-hydroxy-3-oxobutyl phosphate and 5-amino-6-(D-ribitylamino)uracil: step 2/2. Its activity is regulated as follows. Is activated by sulfite ions. Catalyzes the dismutation of two molecules of 6,7-dimethyl-8-ribityllumazine, resulting in the formation of riboflavin and 5-amino-6-(D-ribitylamino)uracil. In Bacillus subtilis (strain 168), this protein is Riboflavin synthase (ribE).